A 264-amino-acid chain; its full sequence is H-2 class II histocompatibility antigen, E-Q beta chain (264 aa).

A signal peptide spans 1–26; that stretch reads MVWLPRVPCVAAVILLLTVLSPPVAL. Residues 27 to 121 form a beta-1 region; it reads VRDSRPWFLE…IFDNFLVRRR (95 aa). The Extracellular portion of the chain corresponds to 27–225; the sequence is VRDSRPWFLE…KAQSTSAQNK (199 aa). Cystine bridges form between Cys-38-Cys-106 and Cys-144-Cys-200. N-linked (GlcNAc...) asparagine glycosylation is present at Asn-46. Residues 122–225 form a beta-2 region; it reads VEPTVTVYPT…KAQSTSAQNK (104 aa). In terms of domain architecture, Ig-like C1-type spans 124–214; sequence PTVTVYPTKT…PSLTDPVTVE (91 aa). The chain crosses the membrane as a helical span at residues 226 to 246; the sequence is MLSGVGGFVLGLLFLGAGLFI. Over 247–264 the chain is Cytoplasmic; it reads YFRNQKGQSGLQPTGLLS.

Belongs to the MHC class II family.

It localises to the membrane. The chain is H-2 class II histocompatibility antigen, E-Q beta chain from Mus musculus (Mouse).